The chain runs to 350 residues: MSKTPERLVTSEVRDEDMTEASLRPLTLADFTGQAAARQNLSVFIAAAKARREALDHVLFVGPPGLGKTTLAQIVARELGVNFRSTSGPVIAKAGDLAAQLTALEERDVLFIDEIHRLNPAVEEILYPAMEDFQLDLIIGEGPGARSVKIDLARFTLVGATTRAGLLTTPLRDRFGIPIRLEFYTIEELERIVLRGARVQGLALEKEGANEIAKRARGTPRIAGRLLRRVRDFAIVDGVESVTRTLADKALSLLDVDPIGLDQMDRRYLNVIALSFGGGPVGIETIAAALSEPRDAIEDIIEPYLIQQGFLQRTPRGRLLTPHAFRHLGLKEPVRETPQYGLFPDQSEED.

Residues 1-184 form a large ATPase domain (RuvB-L) region; the sequence is MSKTPERLVT…FGIPIRLEFY (184 aa). ATP is bound by residues leucine 23, arginine 24, glycine 65, lysine 68, threonine 69, threonine 70, 131-133, arginine 174, tyrosine 184, and arginine 221; that span reads EDF. Threonine 69 serves as a coordination point for Mg(2+). Positions 185 to 255 are small ATPAse domain (RuvB-S); that stretch reads TIEELERIVL…LADKALSLLD (71 aa). The head domain (RuvB-H) stretch occupies residues 258 to 350; that stretch reads PIGLDQMDRR…GLFPDQSEED (93 aa). Positions 294, 313, and 318 each coordinate DNA.

It belongs to the RuvB family. In terms of assembly, homohexamer. Forms an RuvA(8)-RuvB(12)-Holliday junction (HJ) complex. HJ DNA is sandwiched between 2 RuvA tetramers; dsDNA enters through RuvA and exits via RuvB. An RuvB hexamer assembles on each DNA strand where it exits the tetramer. Each RuvB hexamer is contacted by two RuvA subunits (via domain III) on 2 adjacent RuvB subunits; this complex drives branch migration. In the full resolvosome a probable DNA-RuvA(4)-RuvB(12)-RuvC(2) complex forms which resolves the HJ.

Its subcellular location is the cytoplasm. It carries out the reaction ATP + H2O = ADP + phosphate + H(+). In terms of biological role, the RuvA-RuvB-RuvC complex processes Holliday junction (HJ) DNA during genetic recombination and DNA repair, while the RuvA-RuvB complex plays an important role in the rescue of blocked DNA replication forks via replication fork reversal (RFR). RuvA specifically binds to HJ cruciform DNA, conferring on it an open structure. The RuvB hexamer acts as an ATP-dependent pump, pulling dsDNA into and through the RuvAB complex. RuvB forms 2 homohexamers on either side of HJ DNA bound by 1 or 2 RuvA tetramers; 4 subunits per hexamer contact DNA at a time. Coordinated motions by a converter formed by DNA-disengaged RuvB subunits stimulates ATP hydrolysis and nucleotide exchange. Immobilization of the converter enables RuvB to convert the ATP-contained energy into a lever motion, pulling 2 nucleotides of DNA out of the RuvA tetramer per ATP hydrolyzed, thus driving DNA branch migration. The RuvB motors rotate together with the DNA substrate, which together with the progressing nucleotide cycle form the mechanistic basis for DNA recombination by continuous HJ branch migration. Branch migration allows RuvC to scan DNA until it finds its consensus sequence, where it cleaves and resolves cruciform DNA. This chain is Holliday junction branch migration complex subunit RuvB, found in Beijerinckia indica subsp. indica (strain ATCC 9039 / DSM 1715 / NCIMB 8712).